The chain runs to 657 residues: MSGYFQKRMLKYPLYGLIAATIILSVITFFFSWWLSALVVVGGIILTVAMFYFEYRLNEDVQLYVSNLTYRIKRSEEEALVEMPMGILLYDEHYKIEWVNPFMSKYFDKAELIGESLEEVGPEFLDVITGNDEKGIMSIAWRDHRFDTIVKRKERILYLYDRTEYYDLNKKFQANKSVFAVIFLDNYDEWAQGMDDRRRSALNNLVTSMLTNWAREHRIYLKRISTDRFMAFLTEEMLKRLEEEKFQILDRIRERTSKQNIPLTLSIGIGYKEDDLIQLADLAQSSLDLALGRGGDQVVIKQPEGKVRFYGGKTNPMEKRTRVRARVISQALQELITQSDQVFVMGHRYPDMDVIGSSLGVMRIAEMNDRNAYVVVEPGKMSPDVKRLMNEIEEYPNVIKNIVTPQVALENITEKSLLVVVDTHKPSMVINKELLDSATNVVVVDHHRRSEEFVGSPVLVYIEPYASSTAELITELFEYQPDLEQVGKIEATALLSGIVVDTKNFTLRTGSRTFDAASYLRSLGADTILVQQFLKEDITTFTQRSRLVESLEIYHDGMAIATGHEDEEFGTVIAAQAADTMLSMEGVQASFVITLRPDKLIGISARSLGQINVQVIMEKLGGGGHLSNAATQLKDVTIAEAEKQLISAIDAYWKGET.

Helical transmembrane passes span 13–35 and 37–53; these read PLYGLIAATIILSVITFFFSWWL and ALVVVGGIILTVAMFYF. Positions 74 to 137 are PAS-like; it reads RSEEEALVEM…ITGNDEKGIM (64 aa). A GGDEF domain is found at 175–303; it reads NKSVFAVIFL…GGDQVVIKQP (129 aa). Positions 342-498 are DHH; that stretch reads VFVMGHRYPD…IEATALLSGI (157 aa). Residues histidine 347, aspartate 351, aspartate 353, aspartate 422, histidine 446, and aspartate 501 each coordinate Mn(2+). The interval 592-645 is DHHA1; sequence VITLRPDKLIGISARSLGQINVQVIMEKLGGGGHLSNAATQLKDVTIAEAEKQL.

This sequence belongs to the GdpP/PdeA phosphodiesterase family. Heme b is required as a cofactor. Mn(2+) serves as cofactor.

The protein resides in the cell membrane. It catalyses the reaction 3',3'-c-di-AMP + H2O = 5'-O-phosphonoadenylyl-(3'-&gt;5')-adenosine + H(+). In terms of biological role, has phosphodiesterase (PDE) activity against cyclic-di-AMP (c-di-AMP). Overexpression decreases export of c-di-AMP, leads to slightly increased susceptibility to the antibiotic cefuroxime and somewhat slower growth in macrophages. There are at least 2 PDEs for c-di-AMP in this bacteria (this one and pgpH); this may be the major PDE for intracellular growth in host macrophages. During host infection c-di-AMP is secreted into the host cytoplasm which leads to interferon-beta production and secretion by the host. c-di-AMP is a second messenger that mediates growth, cell wall stability and virulence. May monitor cellular heme or NO levels. This chain is Cyclic-di-AMP phosphodiesterase PdeA, found in Listeria monocytogenes serotype 1/2a (strain 10403S).